We begin with the raw amino-acid sequence, 205 residues long: Cbp/p300-interacting transactivator 3 (205 aa).

The protein belongs to the CITED family.

Its subcellular location is the nucleus. Its function is as follows. Acts as a transcriptional coactivator. Enhances estrogen-dependent transactivation mediated by estrogen receptors. The sequence is that of Cbp/p300-interacting transactivator 3 (CITED3) from Gallus gallus (Chicken).